We begin with the raw amino-acid sequence, 164 residues long: Ribosome maturation factor RimP (164 aa).

Belongs to the RimP family.

The protein resides in the cytoplasm. In terms of biological role, required for maturation of 30S ribosomal subunits. The chain is Ribosome maturation factor RimP from Thermodesulfovibrio yellowstonii (strain ATCC 51303 / DSM 11347 / YP87).